We begin with the raw amino-acid sequence, 276 residues long: Pantothenate synthetase (276 aa).

Position 27 to 34 (Met27 to His34) interacts with ATP. His34 serves as the catalytic Proton donor. Residue Gln58 coordinates (R)-pantoate. Gln58 serves as a coordination point for beta-alanine. Position 147-150 (Gly147–Asp150) interacts with ATP. Gln153 is a binding site for (R)-pantoate. ATP is bound by residues Val176 and Leu184–Arg187.

This sequence belongs to the pantothenate synthetase family. Homodimer.

Its subcellular location is the cytoplasm. It catalyses the reaction (R)-pantoate + beta-alanine + ATP = (R)-pantothenate + AMP + diphosphate + H(+). Its pathway is cofactor biosynthesis; (R)-pantothenate biosynthesis; (R)-pantothenate from (R)-pantoate and beta-alanine: step 1/1. Functionally, catalyzes the condensation of pantoate with beta-alanine in an ATP-dependent reaction via a pantoyl-adenylate intermediate. This chain is Pantothenate synthetase, found in Helicobacter acinonychis (strain Sheeba).